Reading from the N-terminus, the 856-residue chain is Paladin (856 aa).

Residues 1 to 16 show a composition bias toward low complexity; that stretch reads MGTTASTAQQTVSAGT. The interval 1–29 is disordered; sequence MGTTASTAQQTVSAGTPFEGLQGSGTMDS. A lipid anchor (N-myristoyl glycine) is attached at G2. Position 86 is a phosphoserine (S86).

It belongs to the paladin family. As to expression, expressed in endothelial cells, and in certain larger vessels, in mural cells. In the brain, possibly expressed in microglia. Expressed in peripheral blood mononuclear cells (at protein level).

Its subcellular location is the cytoplasm. It is found in the cytosol. The chain is Paladin (PALD1) from Homo sapiens (Human).